The sequence spans 252 residues: Imidazole glycerol phosphate synthase subunit HisF (252 aa).

Catalysis depends on residues Asp-11 and Asp-130.

It belongs to the HisA/HisF family. Heterodimer of HisH and HisF.

Its subcellular location is the cytoplasm. The enzyme catalyses 5-[(5-phospho-1-deoxy-D-ribulos-1-ylimino)methylamino]-1-(5-phospho-beta-D-ribosyl)imidazole-4-carboxamide + L-glutamine = D-erythro-1-(imidazol-4-yl)glycerol 3-phosphate + 5-amino-1-(5-phospho-beta-D-ribosyl)imidazole-4-carboxamide + L-glutamate + H(+). It functions in the pathway amino-acid biosynthesis; L-histidine biosynthesis; L-histidine from 5-phospho-alpha-D-ribose 1-diphosphate: step 5/9. IGPS catalyzes the conversion of PRFAR and glutamine to IGP, AICAR and glutamate. The HisF subunit catalyzes the cyclization activity that produces IGP and AICAR from PRFAR using the ammonia provided by the HisH subunit. The chain is Imidazole glycerol phosphate synthase subunit HisF from Hydrogenobaculum sp. (strain Y04AAS1).